Consider the following 202-residue polypeptide: Solute carrier family 66 member 3 (202 aa).

A signal peptide spans 1–19; it reads MEAGLLWFCNWSTLGVCAA. 4 helical membrane passes run 33–53, 64–84, 94–114, and 171–191; these read SARGISLPSLLLELAGFLVFL, LTYLEYPILIAQDIVLLLFVF, LPYMAVFVSSWFILSLQKWII, and LTILIRFVIMLALNIWVTATV.

Its subcellular location is the membrane. This is Solute carrier family 66 member 3 (Slc66a3) from Mus musculus (Mouse).